The following is an 85-amino-acid chain: uncharacterized protein (85 aa).

This sequence to A.fulgidus AF_0255 and AF_1363.

This is an uncharacterized protein from Archaeoglobus fulgidus (strain ATCC 49558 / DSM 4304 / JCM 9628 / NBRC 100126 / VC-16).